The sequence spans 57 residues: UPF0391 membrane protein RPB_2024 (57 aa).

Helical transmembrane passes span 4-24 and 30-50; these read WVVTFLVVALIAGLLGFGGIA and IAKVIFFIAIVLFLVSAVVGL.

It belongs to the UPF0391 family.

Its subcellular location is the cell membrane. The polypeptide is UPF0391 membrane protein RPB_2024 (Rhodopseudomonas palustris (strain HaA2)).